A 247-amino-acid polypeptide reads, in one-letter code: Sensory rhodopsin-1 (247 aa).

Topologically, residues 1 to 4 are extracellular; that stretch reads MTGA. Residues 5 to 26 form a helical membrane-spanning segment; the sequence is VSAAYWIAAVAFLVGLGITAAL. Residues 27–35 lie on the Cytoplasmic side of the membrane; it reads YAKLGESED. The helical transmembrane segment at 36–57 threads the bilayer; that stretch reads RGRLAALAVIPGFAGLAYAGMA. Over 58–71 the chain is Extracellular; sequence LGIGTVTVNGAELV. Residues 72–93 form a helical membrane-spanning segment; sequence GLRYVDWIVTTPLLVGFIGYVA. At 94 to 96 the chain is on the cytoplasmic side; sequence GAS. A helical transmembrane segment spans residues 97–119; the sequence is RRAIAGVMLADALMIAFGAGAVV. Topologically, residues 120–123 are extracellular; sequence TGGT. Residues 124 to 151 form a helical membrane-spanning segment; that stretch reads LKWVLFGVSSIFHVTLFAYLYVVFPRAV. Residues 152–154 are Cytoplasmic-facing; that stretch reads PDD. The helical transmembrane segment at 155–182 threads the bilayer; the sequence is PMQRGLFSLLKNHVGLLWLAYPFVWLMG. The Extracellular portion of the chain corresponds to 183-190; that stretch reads PAGIGFTT. The chain crosses the membrane as a helical span at residues 191–223; sequence GVGAALTYAFLDVLAKVPYVYFFYARRQAFTDV. Position 206 is an N6-(retinylidene)lysine (lysine 206). Topologically, residues 224–247 are cytoplasmic; sequence VSAATADREDATDAVGDGAPTAAD.

The protein belongs to the archaeal/bacterial/fungal opsin family. Interacts with HTR-I.

The protein resides in the cell membrane. In terms of biological role, involved in the control of phototaxis. Mediates both photoattractant (in the orange light) and photophobic (in the near UV light) responses. The signal is then transmitted to the sensory rhodopsin I transducer (HTR-I). The polypeptide is Sensory rhodopsin-1 (sop1) (Halobacterium sp. (strain SG1)).